A 222-amino-acid chain; its full sequence is Probable transaldolase (222 aa).

K91 functions as the Schiff-base intermediate with substrate in the catalytic mechanism.

This sequence belongs to the transaldolase family. Type 3B subfamily.

It is found in the cytoplasm. It catalyses the reaction D-sedoheptulose 7-phosphate + D-glyceraldehyde 3-phosphate = D-erythrose 4-phosphate + beta-D-fructose 6-phosphate. The protein operates within carbohydrate degradation; pentose phosphate pathway; D-glyceraldehyde 3-phosphate and beta-D-fructose 6-phosphate from D-ribose 5-phosphate and D-xylulose 5-phosphate (non-oxidative stage): step 2/3. Its function is as follows. Transaldolase is important for the balance of metabolites in the pentose-phosphate pathway. This is Probable transaldolase from Chlorobium phaeovibrioides (strain DSM 265 / 1930) (Prosthecochloris vibrioformis (strain DSM 265)).